The following is a 470-amino-acid chain: Serine/threonine-protein kinase PEPKR2 (470 aa).

The Protein kinase domain occupies Tyr107 to Ile355. Residues Ile113 to Val121 and Lys136 each bind ATP. Asp224 acts as the Proton acceptor in catalysis. The segment covering Gly377–Ser386 has biased composition (polar residues). Disordered stretches follow at residues Gly377–Asp419 and Arg441–Ser464. Basic and acidic residues predominate over residues Pro387–Pro403. Positions Cys445 to Ser464 are enriched in polar residues.

This sequence belongs to the protein kinase superfamily. Ser/Thr protein kinase family.

The enzyme catalyses L-seryl-[protein] + ATP = O-phospho-L-seryl-[protein] + ADP + H(+). It carries out the reaction L-threonyl-[protein] + ATP = O-phospho-L-threonyl-[protein] + ADP + H(+). In Arabidopsis thaliana (Mouse-ear cress), this protein is Serine/threonine-protein kinase PEPKR2 (PEPKR2).